We begin with the raw amino-acid sequence, 244 residues long: Large ribosomal subunit protein bL25 (244 aa).

Residues 197-244 are disordered; sequence ADVEAEAAEAALAKEAATEAAEEEETEKPASEAEASGEAEQADTDKKE. Low complexity predominate over residues 204–215; the sequence is AEAALAKEAATE.

The protein belongs to the bacterial ribosomal protein bL25 family. CTC subfamily. In terms of assembly, part of the 50S ribosomal subunit; part of the 5S rRNA/L5/L18/L25 subcomplex. Contacts the 5S rRNA. Binds to the 5S rRNA independently of L5 and L18.

Its function is as follows. This is one of the proteins that binds to the 5S RNA in the ribosome where it forms part of the central protuberance. In Coxiella burnetii (strain CbuK_Q154) (Coxiella burnetii (strain Q154)), this protein is Large ribosomal subunit protein bL25.